A 371-amino-acid chain; its full sequence is Cytochrome b (371 aa).

Transmembrane regions (helical) follow at residues 25-45, 69-90, 105-125, and 170-190; these read FGSM…FLAV, WMMQ…YIHI, WMSG…GYVL, and FFAL…LHII. His-75 and His-89 together coordinate heme b. Residues His-174 and His-188 each coordinate heme b. His-193 lines the a ubiquinone pocket. 4 consecutive transmembrane segments (helical) span residues 218–238, 280–300, 312–332, and 339–358; these read YKDL…VSFF, LGGA…PFTH, LSQL…WAAT, and YIII…ISMP.

The protein belongs to the cytochrome b family. The cytochrome bc1 complex contains 3 respiratory subunits (MT-CYB, CYC1 and UQCRFS1), 2 core proteins (UQCRC1 and UQCRC2) and probably 6 low-molecular weight proteins. Requires heme b as cofactor.

The protein localises to the mitochondrion inner membrane. Its function is as follows. Component of the ubiquinol-cytochrome c reductase complex (complex III or cytochrome b-c1 complex) that is part of the mitochondrial respiratory chain. The b-c1 complex mediates electron transfer from ubiquinol to cytochrome c. Contributes to the generation of a proton gradient across the mitochondrial membrane that is then used for ATP synthesis. The polypeptide is Cytochrome b (MT-CYB) (Python molurus (Indian python)).